The chain runs to 322 residues: MSFSAVTKNELARVVGSKKCCRMAELAALIKMDGSVQISGQKKFSLNIVTENAAVARKIFTLLKNLFGLSTEIMVRRKVRLRKNNVYIVRIPAQPGIEEIFKALGFQAGSFSFTEEGIVKDLIARDCCRKAYLRGAFLGGGSVNNPEGTYHLEIITDNQKHAQDLVELMQYFQLPAKVSPRKNWYVVYLKGSEQIIDCLNLMEAHSALLDFENARIYKGVRNQVNRLVNCETANLNKTVNAAVRQLENIKFLADRIGLEKLPKPLKETAEYRLQYPDASLKELGELWTPPVGKSGVNHRIRKIERLAEKLRSGKEYHGYKED.

Residues 279–312 (SLKELGELWTPPVGKSGVNHRIRKIERLAEKLRS) constitute a DNA-binding region (H-T-H motif).

It belongs to the WhiA family.

In terms of biological role, involved in cell division and chromosome segregation. This Desulforamulus reducens (strain ATCC BAA-1160 / DSM 100696 / MI-1) (Desulfotomaculum reducens) protein is Probable cell division protein WhiA.